The primary structure comprises 301 residues: GLABROUS1 enhancer-binding protein-like 2 (301 aa).

The tract at residues 1–62 (MATPTELGFS…NTKMASPPSN (62 aa)) is disordered. Over residues 44-54 (KKKKKKTKHNT) the composition is skewed to basic residues. The interval 268–289 (LSNEWKALCVEELKLNINKLRF) is non-canonical leucine-zipper.

Belongs to the GeBP family. As to quaternary structure, homo- and heterodimers. Interacts with GEBP, GPL1 and GPL3. Expressed in the apical meristem and young leaf primordia. Detected in the vascular tissues of cotyledons and leaves, in hydathodes and in the septun of siliques, but not in roots.

It localises to the nucleus. Functionally, probable transcription factor. May play redundant roles with GEBP and GPL1 in cytokinin responses by regulating the transcript levels of type-A ARR response genes. Involved in stress responses. Plays a repressive role in cell expansion by counteracting the positive role of CPR5 in this process, but does not regulate cell proliferation or endoreduplication. The chain is GLABROUS1 enhancer-binding protein-like 2 from Arabidopsis thaliana (Mouse-ear cress).